The chain runs to 365 residues: Isopentenyl-diphosphate delta-isomerase (365 aa).

Position 8 to 9 (8 to 9 (RK)) interacts with substrate. FMN contacts are provided by residues 67–69 (SIT), Ser97, and Asn126. Substrate is bound at residue 97–99 (SQR). Gln160 serves as a coordination point for substrate. Glu161 is a binding site for Mg(2+). FMN is bound by residues Lys192, Thr222, 272 to 274 (GIR), and 293 to 294 (AL).

This sequence belongs to the IPP isomerase type 2 family. In terms of assembly, homooctamer. Dimer of tetramers. Requires FMN as cofactor. It depends on NADPH as a cofactor. Mg(2+) serves as cofactor.

Its subcellular location is the cytoplasm. The enzyme catalyses isopentenyl diphosphate = dimethylallyl diphosphate. Involved in the biosynthesis of isoprenoids. Catalyzes the 1,3-allylic rearrangement of the homoallylic substrate isopentenyl (IPP) to its allylic isomer, dimethylallyl diphosphate (DMAPP). The sequence is that of Isopentenyl-diphosphate delta-isomerase from Methanosarcina mazei (strain ATCC BAA-159 / DSM 3647 / Goe1 / Go1 / JCM 11833 / OCM 88) (Methanosarcina frisia).